The sequence spans 85 residues: Small ribosomal subunit protein bS16 (85 aa).

This sequence belongs to the bacterial ribosomal protein bS16 family.

This is Small ribosomal subunit protein bS16 from Nitrosomonas eutropha (strain DSM 101675 / C91 / Nm57).